The following is a 450-amino-acid chain: tRNA modification GTPase MnmE (450 aa).

Arg23, Glu79, and Lys118 together coordinate (6S)-5-formyl-5,6,7,8-tetrahydrofolate. The region spanning 214–374 (GITLILVGKP…LKEHILNKVG (161 aa)) is the TrmE-type G domain. Asn224 serves as a coordination point for K(+). GTP-binding positions include 224-229 (NAGKSS), 243-249 (TSIAGTT), and 268-271 (DTAG). Ser228 is a binding site for Mg(2+). 3 residues coordinate K(+): Thr243, Ile245, and Thr248. Thr249 serves as a coordination point for Mg(2+). Lys450 contacts (6S)-5-formyl-5,6,7,8-tetrahydrofolate.

Belongs to the TRAFAC class TrmE-Era-EngA-EngB-Septin-like GTPase superfamily. TrmE GTPase family. Homodimer. Heterotetramer of two MnmE and two MnmG subunits. The cofactor is K(+).

It is found in the cytoplasm. Exhibits a very high intrinsic GTPase hydrolysis rate. Involved in the addition of a carboxymethylaminomethyl (cmnm) group at the wobble position (U34) of certain tRNAs, forming tRNA-cmnm(5)s(2)U34. In Francisella tularensis subsp. novicida (strain U112), this protein is tRNA modification GTPase MnmE.